A 430-amino-acid polypeptide reads, in one-letter code: MLDIKRIRTETDAVEAALQRRGGAVDLNAFRALEGRKRTIQTEVEQLQSQRNTLSKEIGQRKAAREDASDLFEQMQRVGPRLKELESVLAELEGQVEAIIVALPNTPHSSVPDGLGEQDNVEVRRWSPSGGEGGDPQVLGFEAKNHWEIGEALGILDFEAGAAVAGSRFTVFKGVGARLSRALANYMLDLHTGSHGYQEILPPVLTNAECLFGTGQLPKFEEDLFRTRDDAYYMIPTAEVPVTNLVREQILEDSQLPMRMTAWTNCFRREAGSAGKDTRGLIRQHQFDKVELVQIRRPEESYAALEELTGHAEQVLKGLGLPFRTVVLCSGDMGFGASKTYDIEVWLPGQGKYREISSCSNTEDFQARRMKARFRREAKGKPELVHTLNGSGVAVGRALVAVLENYQQADGRVVVPEVLRPYMGGLEIIG.

237–239 provides a ligand contact to L-serine; it reads TAE. 268–270 provides a ligand contact to ATP; sequence RRE. Glu291 lines the L-serine pocket. 355–358 serves as a coordination point for ATP; the sequence is EISS. Ser391 serves as a coordination point for L-serine.

It belongs to the class-II aminoacyl-tRNA synthetase family. Type-1 seryl-tRNA synthetase subfamily. As to quaternary structure, homodimer. The tRNA molecule binds across the dimer.

It is found in the cytoplasm. It carries out the reaction tRNA(Ser) + L-serine + ATP = L-seryl-tRNA(Ser) + AMP + diphosphate + H(+). The enzyme catalyses tRNA(Sec) + L-serine + ATP = L-seryl-tRNA(Sec) + AMP + diphosphate + H(+). The protein operates within aminoacyl-tRNA biosynthesis; selenocysteinyl-tRNA(Sec) biosynthesis; L-seryl-tRNA(Sec) from L-serine and tRNA(Sec): step 1/1. Its function is as follows. Catalyzes the attachment of serine to tRNA(Ser). Is also able to aminoacylate tRNA(Sec) with serine, to form the misacylated tRNA L-seryl-tRNA(Sec), which will be further converted into selenocysteinyl-tRNA(Sec). In Magnetococcus marinus (strain ATCC BAA-1437 / JCM 17883 / MC-1), this protein is Serine--tRNA ligase.